The chain runs to 244 residues: Ribosomal RNA large subunit methyltransferase E (244 aa).

S-adenosyl-L-methionine-binding residues include Gly81, Trp83, Asp109, Asp125, and Asp149. Residue Lys189 is the Proton acceptor of the active site.

The protein belongs to the class I-like SAM-binding methyltransferase superfamily. RNA methyltransferase RlmE family.

Its subcellular location is the cytoplasm. The enzyme catalyses uridine(2552) in 23S rRNA + S-adenosyl-L-methionine = 2'-O-methyluridine(2552) in 23S rRNA + S-adenosyl-L-homocysteine + H(+). Functionally, specifically methylates the uridine in position 2552 of 23S rRNA at the 2'-O position of the ribose in the fully assembled 50S ribosomal subunit. The protein is Ribosomal RNA large subunit methyltransferase E of Cereibacter sphaeroides (strain ATCC 17023 / DSM 158 / JCM 6121 / CCUG 31486 / LMG 2827 / NBRC 12203 / NCIMB 8253 / ATH 2.4.1.) (Rhodobacter sphaeroides).